Reading from the N-terminus, the 104-residue chain is Large ribosomal subunit protein bL21 (104 aa).

It belongs to the bacterial ribosomal protein bL21 family. Part of the 50S ribosomal subunit. Contacts protein L20.

This protein binds to 23S rRNA in the presence of protein L20. The polypeptide is Large ribosomal subunit protein bL21 (Clostridium botulinum (strain Kyoto / Type A2)).